The following is a 132-amino-acid chain: Large ribosomal subunit protein uL14 (132 aa).

The protein belongs to the universal ribosomal protein uL14 family. In terms of assembly, part of the 50S ribosomal subunit. Forms a cluster with proteins L3 and L24e, part of which may contact the 16S rRNA in 2 intersubunit bridges.

Its function is as follows. Binds to 23S rRNA. Forms part of two intersubunit bridges in the 70S ribosome. The polypeptide is Large ribosomal subunit protein uL14 (Methanococcus maripaludis (strain C5 / ATCC BAA-1333)).